We begin with the raw amino-acid sequence, 314 residues long: Beta-ketoacyl-[acyl-carrier-protein] synthase III (314 aa).

Catalysis depends on residues Cys112 and His241. An ACP-binding region spans residues Gln242–Arg246. Asn271 is an active-site residue.

Belongs to the thiolase-like superfamily. FabH family. Homodimer.

The protein localises to the cytoplasm. It carries out the reaction malonyl-[ACP] + acetyl-CoA + H(+) = 3-oxobutanoyl-[ACP] + CO2 + CoA. It participates in lipid metabolism; fatty acid biosynthesis. Its function is as follows. Catalyzes the condensation reaction of fatty acid synthesis by the addition to an acyl acceptor of two carbons from malonyl-ACP. Catalyzes the first condensation reaction which initiates fatty acid synthesis and may therefore play a role in governing the total rate of fatty acid production. Possesses both acetoacetyl-ACP synthase and acetyl transacylase activities. Its substrate specificity determines the biosynthesis of branched-chain and/or straight-chain of fatty acids. This chain is Beta-ketoacyl-[acyl-carrier-protein] synthase III, found in Vesicomyosocius okutanii subsp. Calyptogena okutanii (strain HA).